Here is a 728-residue protein sequence, read N- to C-terminus: 1,4-alpha-glucan branching enzyme GlgB (728 aa).

The active-site Nucleophile is aspartate 405. Glutamate 458 (proton donor) is an active-site residue.

The protein belongs to the glycosyl hydrolase 13 family. GlgB subfamily. As to quaternary structure, monomer.

It catalyses the reaction Transfers a segment of a (1-&gt;4)-alpha-D-glucan chain to a primary hydroxy group in a similar glucan chain.. It functions in the pathway glycan biosynthesis; glycogen biosynthesis. Its function is as follows. Catalyzes the formation of the alpha-1,6-glucosidic linkages in glycogen by scission of a 1,4-alpha-linked oligosaccharide from growing alpha-1,4-glucan chains and the subsequent attachment of the oligosaccharide to the alpha-1,6 position. This chain is 1,4-alpha-glucan branching enzyme GlgB, found in Shigella flexneri.